We begin with the raw amino-acid sequence, 601 residues long: Elongation factor 4 (601 aa).

Residues 6-188 form the tr-type G domain; it reads SHIRNFSIIA…QIVHRVPAPE (183 aa). GTP-binding positions include 18–23 and 135–138; these read DHGKST and NKID.

The protein belongs to the TRAFAC class translation factor GTPase superfamily. Classic translation factor GTPase family. LepA subfamily.

It localises to the cell inner membrane. The enzyme catalyses GTP + H2O = GDP + phosphate + H(+). Functionally, required for accurate and efficient protein synthesis under certain stress conditions. May act as a fidelity factor of the translation reaction, by catalyzing a one-codon backward translocation of tRNAs on improperly translocated ribosomes. Back-translocation proceeds from a post-translocation (POST) complex to a pre-translocation (PRE) complex, thus giving elongation factor G a second chance to translocate the tRNAs correctly. Binds to ribosomes in a GTP-dependent manner. The chain is Elongation factor 4 from Anaeromyxobacter dehalogenans (strain 2CP-1 / ATCC BAA-258).